We begin with the raw amino-acid sequence, 490 residues long: tRNA modification GTPase MnmE (490 aa).

3 residues coordinate (6S)-5-formyl-5,6,7,8-tetrahydrofolate: Arg23, Glu80, and Lys133. Positions 229-412 (GIEVVIAGQP…LRRILLEVAG (184 aa)) constitute a TrmE-type G domain. K(+) is bound at residue Asn239. GTP-binding positions include 239-244 (NAGKSS), 258-264 (TPVAGTT), and 283-286 (DTAG). Ser243 contacts Mg(2+). Residues Thr258, Val260, and Thr263 each contribute to the K(+) site. Thr264 provides a ligand contact to Mg(2+). Positions 366–382 (PTAPTESAAVPPASARP) are enriched in low complexity. The segment at 366 to 388 (PTAPTESAAVPPASARPAPAPRP) is disordered. Residue 393 to 395 (SAR) coordinates GTP. Lys490 contacts (6S)-5-formyl-5,6,7,8-tetrahydrofolate.

Belongs to the TRAFAC class TrmE-Era-EngA-EngB-Septin-like GTPase superfamily. TrmE GTPase family. As to quaternary structure, homodimer. Heterotetramer of two MnmE and two MnmG subunits. K(+) is required as a cofactor.

It localises to the cytoplasm. In terms of biological role, exhibits a very high intrinsic GTPase hydrolysis rate. Involved in the addition of a carboxymethylaminomethyl (cmnm) group at the wobble position (U34) of certain tRNAs, forming tRNA-cmnm(5)s(2)U34. The sequence is that of tRNA modification GTPase MnmE from Verminephrobacter eiseniae (strain EF01-2).